A 379-amino-acid polypeptide reads, in one-letter code: Alcohol dehydrogenase 1 (379 aa).

Positions 47, 49, 69, 99, 102, 105, 113, and 177 each coordinate Zn(2+). An alcohol-binding residues include threonine 49 and histidine 69. An NAD(+)-binding site is contributed by threonine 49. NAD(+)-binding positions include glycine 202 to glycine 207, aspartate 226, arginine 231, threonine 272, valine 295, valine 295 to valine 297, phenylalanine 322, and arginine 372.

The protein belongs to the zinc-containing alcohol dehydrogenase family. As to quaternary structure, homodimer. Zn(2+) serves as cofactor.

It is found in the cytoplasm. The enzyme catalyses a primary alcohol + NAD(+) = an aldehyde + NADH + H(+). It catalyses the reaction a secondary alcohol + NAD(+) = a ketone + NADH + H(+). This chain is Alcohol dehydrogenase 1 (ADH1), found in Zea mays (Maize).